We begin with the raw amino-acid sequence, 903 residues long: Zinc finger CCCH domain-containing protein 27 (903 aa).

The disordered stretch occupies residues 1–144; that stretch reads MIKESSSPAL…GRNGAPWAQH (144 aa). The segment covering 11–24 has biased composition (basic and acidic residues); sequence DADKIEVPSPKDEN. The segment covering 33–46 has biased composition (acidic residues); that stretch reads TDNEDFEISDDDDD. The span at 86 to 96 shows a compositional bias: basic and acidic residues; sequence SHGEAQKDFFP. The segment at 225 to 253 adopts a C3H1-type zinc-finger fold; the sequence is GMPRQRCRDFEERGFCLRGDMCPMEHGLN. The interval 390–456 is disordered; it reads ASKKLGHGKT…GRQSNRASHK (67 aa). Residues 397-410 show a composition bias toward low complexity; the sequence is GKTANATSTSATGN. Over residues 432–441 the composition is skewed to polar residues; it reads KDSNGQSNSR. The region spanning 459–531 is the RRM domain; the sequence is RTLYVNGIPL…RFIKLWWANR (73 aa). Disordered stretches follow at residues 545–609, 642–720, and 826–903; these read KSSH…DTKR, KQKG…QTSP, and TNHS…DVSQ. Residues 556–576 are compositionally biased toward polar residues; sequence SVPQPSSSNRGKENLQSATPR. The span at 577 to 587 shows a compositional bias: low complexity; it reads ASSGSSAEASG. The stretch at 608–649 forms a coiled coil; that stretch reads KRQESLELLEELRKKQEILAQKRDEFRRQLEKLAKQKGLANS. A compositionally biased stretch (low complexity) spans 693-708; it reads SGELASSSHKSSATSA. Residues 826–886 are compositionally biased toward polar residues; the sequence is TNHSRFQKTS…SMPTATSAKT (61 aa).

This chain is Zinc finger CCCH domain-containing protein 27, found in Oryza sativa subsp. japonica (Rice).